The chain runs to 210 residues: 3-hexulose-6-phosphate synthase (210 aa).

This sequence belongs to the HPS/KGPDC family. HPS subfamily.

The catalysed reaction is D-ribulose 5-phosphate + formaldehyde = D-arabino-hex-3-ulose 6-phosphate. It participates in one-carbon metabolism; formaldehyde assimilation via RuMP pathway; D-fructose 6-phosphate from D-ribulose 5-phosphate and formaldehyde: step 1/2. Functionally, catalyzes the condensation of ribulose 5-phosphate with formaldehyde to form 3-hexulose 6-phosphate. The polypeptide is 3-hexulose-6-phosphate synthase (Staphylococcus aureus (strain MRSA252)).